The primary structure comprises 445 residues: Signal recognition particle 54 kDa protein (445 aa).

GTP contacts are provided by residues 102 to 109 (GVQGSGKT), 184 to 188 (DTAGR), and 244 to 247 (TKMD).

It belongs to the GTP-binding SRP family. SRP54 subfamily. In terms of assembly, part of the signal recognition particle protein translocation system, which is composed of SRP and FtsY. Archaeal SRP consists of a 7S RNA molecule of 300 nucleotides and two protein subunits: SRP54 and SRP19.

The protein localises to the cytoplasm. It catalyses the reaction GTP + H2O = GDP + phosphate + H(+). Its function is as follows. Involved in targeting and insertion of nascent membrane proteins into the cytoplasmic membrane. Binds to the hydrophobic signal sequence of the ribosome-nascent chain (RNC) as it emerges from the ribosomes. The SRP-RNC complex is then targeted to the cytoplasmic membrane where it interacts with the SRP receptor FtsY. This is Signal recognition particle 54 kDa protein from Sulfurisphaera tokodaii (strain DSM 16993 / JCM 10545 / NBRC 100140 / 7) (Sulfolobus tokodaii).